The following is a 100-amino-acid chain: Testis development-related protein 1 (100 aa).

The disordered stretch occupies residues 73–100 (GLGSLGGQDSSGSLVQRASCELESPYEL).

Expressed in the testis but not in any other non-reproductive tissues (at protein level). Mainly located in spermatogenic cells in seminiferous tubules of adult testis.

The protein localises to the cytoplasm. The chain is Testis development-related protein 1 (TDRG1) from Homo sapiens (Human).